The sequence spans 152 residues: Ribosomal RNA large subunit methyltransferase H (152 aa).

Residues Leu68, Gly100, and 119 to 124 (FGPMTW) each bind S-adenosyl-L-methionine.

It belongs to the RNA methyltransferase RlmH family. In terms of assembly, homodimer.

It is found in the cytoplasm. It carries out the reaction pseudouridine(1915) in 23S rRNA + S-adenosyl-L-methionine = N(3)-methylpseudouridine(1915) in 23S rRNA + S-adenosyl-L-homocysteine + H(+). Its function is as follows. Specifically methylates the pseudouridine at position 1915 (m3Psi1915) in 23S rRNA. This is Ribosomal RNA large subunit methyltransferase H from Rhodospirillum centenum (strain ATCC 51521 / SW).